The sequence spans 624 residues: Kelch-like ECH-associated protein 1 (624 aa).

Residue Cys38 is modified to S-(2-succinyl)cysteine. In terms of domain architecture, BTB spans 77–149; it reads CDVTLQVKYE…AYTASISVGE (73 aa). Arg135 is covalently cross-linked (N5-[4-(S-L-cysteinyl)-5-methyl-1H-imidazol-2-yl]-L-ornithine (Arg-Cys) (interchain with C-151 in KEAP1)). Cys151 and Cys241 each carry S-(2-succinyl)cysteine. Cys151 is subject to S-(2,3-dicarboxypropyl)cysteine; alternate. Cys151 carries the post-translational modification S-nitrosocysteine; alternate. An N5-[4-(S-L-cysteinyl)-5-methyl-1H-imidazol-2-yl]-L-ornithine (Cys-Arg) (interchain with R-135 in KEAP1) cross-link involves residue Cys151. The 103-residue stretch at 184 to 286 folds into the BACK domain; it reads AIGIANFAEQ…TPRFLQTQLQ (103 aa). S-(2,3-dicarboxypropyl)cysteine is present on residues Cys257 and Cys273. S-(2-succinyl)cysteine is present on residues Cys288 and Cys319. Cys288 is modified (S-(2,3-dicarboxypropyl)cysteine; alternate). Kelch repeat units lie at residues 327–372, 373–423, 424–470, 471–517, 519–564, and 565–611; these read LIYT…VVGG, LLYA…VIDG, HIYA…VLNR, LLYA…VLHS, IYAA…VHQG, and RIYV…VTME. Cys434 is subject to S-cGMP-cysteine. Cys613 carries the post-translational modification S-(2-succinyl)cysteine.

The protein belongs to the KEAP1 family. In terms of assembly, component of the BCR(KEAP1) E3 ubiquitin ligase complex, at least composed of 2 molecules of CUL3, 2 molecules of KEAP1, and RBX1. Interacts with NFE2L2/NRF2; the interaction is direct. Forms a ternary complex with NFE2L2/NRF2 and PGAM5. Interacts with (phosphorylated) SQSTM1/p62; the interaction is direct and inactivates the BCR(KEAP1) complex by sequestering it in inclusion bodies, promoting its degradation. Interacts with NFE2L1. Interacts with BPTF and PTMA. Interacts with MAP1LC3B. Interacts indirectly with ENC1. Interacts with SESN1 and SESN2. Interacts with HSP90AA1 and HSP90AB1. Interacts with PGCKA1; this interaction prevents the ubiquitination of KEAP1 by TRIM25, thus protecting KEAP1 from degradation. Non-enzymatic covalent modifications of reactive cysteines by electrophile metabolites inactivate the BCR(KEAP1) complex. Accumulation of fumarate promotes the formation of cysteine S-succination (S-(2-succinyl)cysteine), leading to inactivate the BCR(KEAP1) complex and promote NFE2L2/NRF2 nuclear accumulation and activation. Nitric oxide-dependent 8-Nitro-cGMP formation promotes cysteine guanylation (S-cGMP-cysteine), leading to NFE2L2/NRF2 nuclear accumulation and activation. Itaconate, an anti-inflammatory metabolite generated in response to lipopolysaccharide, alkylates cysteines, activating NFE2L2/NRF2. Methylglyoxal, a reactive metabolite that accumulates when the glycolytic enzyme PGK1 is inhibited, promotes formation of a methylimidazole cross-link between proximal Cys-151 and Arg-135 on another KEAP1 molecule, resulting in an inactive dimer that inactivates the BCR(KEAP1) complex. In terms of processing, degraded via a proteasomal-independent process during selective autophagy: interaction with phosphorylated SQSTM1/p62 sequesters KEAP1 in inclusion bodies, leading to its degradation. Post-translationally, auto-ubiquitinated by the BCR(KEAP1) complex. Quinone-induced oxidative stress, but not sulforaphane, increases its ubiquitination. Ubiquitination and subsequent degradation is most pronounced following prolonged exposure of cells to oxidative stress, particularly in glutathione-deficient cells that are highly susceptible to oxidative stress. Deubiquitinated by USP25; leading to stabilization. Ubiquitinated by TRIM25; leading to degradation upon ER stress.

The protein resides in the cytoplasm. It localises to the nucleus. Its pathway is protein modification; protein ubiquitination. Its activity is regulated as follows. Ubiquitin ligase activity of the BCR(KEAP1) complex is inhibited by oxidative stress and electrophile metabolites such as sulforaphane. Electrophile metabolites react with reactive cysteine residues in KEAP1 and trigger non-enzymatic covalent modifications of these cysteine residues, leading to inactivate the ubiquitin ligase activity of the BCR(KEAP1) complex. Selective autophagy also inactivates the BCR(KEAP1) complex via interaction between KEAP1 and SQSTM1/p62, which sequesters the complex in inclusion bodies and promotes its degradation. Its function is as follows. Substrate-specific adapter of a BCR (BTB-CUL3-RBX1) E3 ubiquitin ligase complex that regulates the response to oxidative stress by targeting NFE2L2/NRF2 for ubiquitination. KEAP1 acts as a key sensor of oxidative and electrophilic stress: in normal conditions, the BCR(KEAP1) complex mediates ubiquitination and degradation of NFE2L2/NRF2, a transcription factor regulating expression of many cytoprotective genes. In response to oxidative stress, different electrophile metabolites trigger non-enzymatic covalent modifications of highly reactive cysteine residues in KEAP1, leading to inactivate the ubiquitin ligase activity of the BCR(KEAP1) complex, promoting NFE2L2/NRF2 nuclear accumulation and expression of phase II detoxifying enzymes. In response to selective autophagy, KEAP1 is sequestered in inclusion bodies following its interaction with SQSTM1/p62, leading to inactivation of the BCR(KEAP1) complex and activation of NFE2L2/NRF2. The BCR(KEAP1) complex also mediates ubiquitination of SQSTM1/p62, increasing SQSTM1/p62 sequestering activity and degradation. The BCR(KEAP1) complex also targets BPTF and PGAM5 for ubiquitination and degradation by the proteasome. This Rattus norvegicus (Rat) protein is Kelch-like ECH-associated protein 1.